A 249-amino-acid polypeptide reads, in one-letter code: Pleckstrin homology domain-containing family F member 2 (249 aa).

A Phosphoserine modification is found at S16. One can recognise a PH domain in the interval 35–131 (VLIGEGVLTK…WMNHINKCVT (97 aa)). The residue at position 44 (K44) is an N6-acetyllysine. The FYVE-type zinc finger occupies 152–212 (DSEATVCMRC…ICDFCYDLLS (61 aa)). Zn(2+)-binding residues include C158, C161, C175, C178, C183, C186, C204, and C207. The segment covering 221–233 (PARSDSYSQSLKS) has biased composition (polar residues). The interval 221-249 (PARSDSYSQSLKSPLNDMSDDDDDDDSSD) is disordered. The span at 238–249 (MSDDDDDDDSSD) shows a compositional bias: acidic residues. Phosphoserine occurs at positions 239 and 248.

As to quaternary structure, may interact with EEA1. In terms of tissue distribution, expressed in placenta, ovary and small intestine, as well as in heart and pancreas. Also expressed in peripheral blood mononuclear cells and dendritic cells.

The protein localises to the early endosome membrane. Its subcellular location is the endoplasmic reticulum. In terms of biological role, may play a role in early endosome fusion upstream of RAB5, hence regulating receptor trafficking and fluid-phase transport. Enhances cellular sensitivity to TNF-induced apoptosis. This Homo sapiens (Human) protein is Pleckstrin homology domain-containing family F member 2 (PLEKHF2).